The sequence spans 494 residues: UPF0371 protein str1377 (494 aa).

The protein belongs to the UPF0371 family.

This Streptococcus thermophilus (strain CNRZ 1066) protein is UPF0371 protein str1377.